The primary structure comprises 215 residues: Deoxyadenosine kinase (215 aa).

9 to 17 (GPIGAGKSS) contacts ATP. Substrate contacts are provided by E33, Y45, and N56. D79 (proton acceptor) is an active-site residue. Positions 80, 85, and 150 each coordinate substrate.

The protein belongs to the DCK/DGK family. As to quaternary structure, heterodimer of a deoxyadenosine (DAK) and a deoxyguanosine kinase (DGK).

It catalyses the reaction 2'-deoxyadenosine + ATP = dAMP + ADP + H(+). Functionally, DGK/DAK plays an essential role in generating the deoxyribonucleotide precursors, dGTP and dATP, for DNA metabolism. This is Deoxyadenosine kinase from Lactobacillus acidophilus (strain ATCC 700396 / NCK56 / N2 / NCFM).